The following is a 256-amino-acid chain: Nuclear shuttle protein (256 aa).

The disordered stretch occupies residues 1 to 53 (MYPSRNKRGSYFNQRRQYSRNHVWKRPTAAKRHDWKRRPSNTSKPNDEPKMSA). Basic residues predominate over residues 17 to 39 (QYSRNHVWKRPTAAKRHDWKRRP). The Bipartite nuclear localization signal motif lies at 21 to 42 (NHVWKRPTAAKRHDWKRRPSNT). The short motif at 81–96 (DLGRSEPNRSRSYIRL) is the Nuclear localization signal element. Residues 150 to 187 (ELFGARIHSHGNLSVTPALKDRYYIRHVCKRVLSVEKD) form an interaction with Arabidopsis thaliana NSI protein region.

The protein belongs to the begomovirus nuclear shuttle protein family. As to quaternary structure, binds to single-stranded and double-stranded viral DNA. Interacts with the host nuclear shuttle interacting (NSI) protein. This interaction may allow NSP to recruit NSI monomers to the viral genome and thus regulate nuclear export of viral genome by NSP.

It is found in the host nucleus. It localises to the host cytoplasm. Its subcellular location is the host cell membrane. Functionally, binds to the genomic viral ssDNA, shuttles it into and out of the cell nucleus. Begomoviruses use 2 proteins to transport their DNA from cell to cell. The nuclear shuttle protein (NSP) shuttles it between nucleus and cytoplasm and the movement protein (MP) probably transports the DNA-NSP complex to the cell periphery and facilitates movement across the cell wall. The polypeptide is Nuclear shuttle protein (Abutilon mosaic virus (isolate West India) (AbMV)).